The following is a 250-amino-acid chain: DNA repair protein RecO (250 aa).

Belongs to the RecO family.

Its function is as follows. Involved in DNA repair and RecF pathway recombination. The polypeptide is DNA repair protein RecO (Syntrophomonas wolfei subsp. wolfei (strain DSM 2245B / Goettingen)).